A 594-amino-acid chain; its full sequence is Arginine--tRNA ligase (594 aa).

The short motif at 133-143 is the 'HIGH' region element; sequence ANPTGPMNIVS.

This sequence belongs to the class-I aminoacyl-tRNA synthetase family. As to quaternary structure, monomer.

The protein localises to the cytoplasm. The enzyme catalyses tRNA(Arg) + L-arginine + ATP = L-arginyl-tRNA(Arg) + AMP + diphosphate. The chain is Arginine--tRNA ligase from Leptospira biflexa serovar Patoc (strain Patoc 1 / Ames).